The primary structure comprises 87 residues: Small ribosomal subunit protein uS19m (87 aa).

This sequence belongs to the universal ribosomal protein uS19 family.

Its subcellular location is the mitochondrion. In Dictyostelium citrinum (Slime mold), this protein is Small ribosomal subunit protein uS19m (mrps19).